The sequence spans 185 residues: dTDP-4-dehydrorhamnose 3,5-epimerase (185 aa).

Residues R23, E28, 47-49, and R59 contribute to the substrate site; that span reads QDN. The active-site Proton acceptor is the H62. Substrate contacts are provided by K72 and H119. Y132 functions as the Proton donor in the catalytic mechanism. Substrate contacts are provided by D143 and K168.

The protein belongs to the dTDP-4-dehydrorhamnose 3,5-epimerase family. As to quaternary structure, homodimer.

It carries out the reaction dTDP-4-dehydro-6-deoxy-alpha-D-glucose = dTDP-4-dehydro-beta-L-rhamnose. The protein operates within carbohydrate biosynthesis; dTDP-L-rhamnose biosynthesis. It participates in bacterial outer membrane biogenesis; LPS O-antigen biosynthesis. In terms of biological role, catalyzes the epimerization of the C3' and C5'positions of dTDP-6-deoxy-D-xylo-4-hexulose, forming dTDP-6-deoxy-L-lyxo-4-hexulose. In Escherichia coli (strain K12), this protein is dTDP-4-dehydrorhamnose 3,5-epimerase (rfbC).